The chain runs to 185 residues: Ribosome-recycling factor (185 aa).

The protein belongs to the RRF family.

It is found in the cytoplasm. Responsible for the release of ribosomes from messenger RNA at the termination of protein biosynthesis. May increase the efficiency of translation by recycling ribosomes from one round of translation to another. In Streptococcus pyogenes serotype M1, this protein is Ribosome-recycling factor.